We begin with the raw amino-acid sequence, 201 residues long: Large ribosomal subunit protein bL25 (201 aa).

This sequence belongs to the bacterial ribosomal protein bL25 family. CTC subfamily. In terms of assembly, part of the 50S ribosomal subunit; part of the 5S rRNA/L5/L18/L25 subcomplex. Contacts the 5S rRNA. Binds to the 5S rRNA independently of L5 and L18.

In terms of biological role, this is one of the proteins that binds to the 5S RNA in the ribosome where it forms part of the central protuberance. The sequence is that of Large ribosomal subunit protein bL25 from Aromatoleum aromaticum (strain DSM 19018 / LMG 30748 / EbN1) (Azoarcus sp. (strain EbN1)).